The chain runs to 85 residues: MSQRGNRKTQVGIVVSDKMDKTVVVQVSHLVKHPVYNKYIKRSVKYKAHDEENSCKSGDRVQIVETRPLSKDKRWRVRQIIDRFE.

This sequence belongs to the universal ribosomal protein uS17 family. In terms of assembly, part of the 30S ribosomal subunit.

Functionally, one of the primary rRNA binding proteins, it binds specifically to the 5'-end of 16S ribosomal RNA. The protein is Small ribosomal subunit protein uS17 of Geobacter metallireducens (strain ATCC 53774 / DSM 7210 / GS-15).